The following is a 190-amino-acid chain: Ribosome maturation factor RimM (190 aa).

The PRC barrel domain maps to 95-171; the sequence is DPDEFYDHEL…VVMIEPPEGL (77 aa). Residues 169–190 form a disordered region; the sequence is EGLLDPDFGDKSNSDNSNSDND.

Belongs to the RimM family. Binds ribosomal protein uS19.

It is found in the cytoplasm. In terms of biological role, an accessory protein needed during the final step in the assembly of 30S ribosomal subunit, possibly for assembly of the head region. Essential for efficient processing of 16S rRNA. May be needed both before and after RbfA during the maturation of 16S rRNA. It has affinity for free ribosomal 30S subunits but not for 70S ribosomes. This is Ribosome maturation factor RimM from Rhodococcus erythropolis (strain PR4 / NBRC 100887).